Consider the following 161-residue polypeptide: Putative esterase C31F10.02 (161 aa).

This sequence belongs to the thioesterase PaaI family.

The polypeptide is Putative esterase C31F10.02 (Schizosaccharomyces pombe (strain 972 / ATCC 24843) (Fission yeast)).